Consider the following 476-residue polypeptide: Aspartyl/glutamyl-tRNA(Asn/Gln) amidotransferase subunit B (476 aa).

The protein belongs to the GatB/GatE family. GatB subfamily. As to quaternary structure, heterotrimer of A, B and C subunits.

The catalysed reaction is L-glutamyl-tRNA(Gln) + L-glutamine + ATP + H2O = L-glutaminyl-tRNA(Gln) + L-glutamate + ADP + phosphate + H(+). It catalyses the reaction L-aspartyl-tRNA(Asn) + L-glutamine + ATP + H2O = L-asparaginyl-tRNA(Asn) + L-glutamate + ADP + phosphate + 2 H(+). Functionally, allows the formation of correctly charged Asn-tRNA(Asn) or Gln-tRNA(Gln) through the transamidation of misacylated Asp-tRNA(Asn) or Glu-tRNA(Gln) in organisms which lack either or both of asparaginyl-tRNA or glutaminyl-tRNA synthetases. The reaction takes place in the presence of glutamine and ATP through an activated phospho-Asp-tRNA(Asn) or phospho-Glu-tRNA(Gln). In Shouchella clausii (strain KSM-K16) (Alkalihalobacillus clausii), this protein is Aspartyl/glutamyl-tRNA(Asn/Gln) amidotransferase subunit B.